We begin with the raw amino-acid sequence, 892 residues long: UPF0182 protein MCA2716 (892 aa).

Transmembrane regions (helical) follow at residues Leu7–Leu27, Ile57–Ala77, Gly107–Phe127, Ile163–Ala183, Ile206–Gln226, Leu252–Phe272, and Leu281–Val301.

The protein belongs to the UPF0182 family.

It localises to the cell membrane. The sequence is that of UPF0182 protein MCA2716 from Methylococcus capsulatus (strain ATCC 33009 / NCIMB 11132 / Bath).